Consider the following 40-residue polypeptide: ICTNNCAGYKGCNYACPLNDHPIAYKSCEGEFDPKSKCPR.

Cystine bridges form between Cys2–Cys16, Cys6–Cys28, and Cys12–Cys38.

The protein belongs to the protease inhibitor I20 (potato type II proteinase inhibitor) family.

It localises to the secreted. In terms of biological role, inhibits chymotrypsin and subtilisin strongly. This is Proteinase inhibitor IIB from Solanum tuberosum (Potato).